A 175-amino-acid chain; its full sequence is ATP synthase subunit b (175 aa).

A helical transmembrane segment spans residues Leu20–Trp40.

It belongs to the ATPase B chain family. In terms of assembly, F-type ATPases have 2 components, F(1) - the catalytic core - and F(0) - the membrane proton channel. F(1) has five subunits: alpha(3), beta(3), gamma(1), delta(1), epsilon(1). F(0) has four main subunits: a(1), b(2) and c(10-14). The alpha and beta chains form an alternating ring which encloses part of the gamma chain. F(1) is attached to F(0) by a central stalk formed by the gamma and epsilon chains, while a peripheral stalk is formed by the delta and b chains.

The protein localises to the cell inner membrane. In terms of biological role, f(1)F(0) ATP synthase produces ATP from ADP in the presence of a proton or sodium gradient. F-type ATPases consist of two structural domains, F(1) containing the extramembraneous catalytic core and F(0) containing the membrane proton channel, linked together by a central stalk and a peripheral stalk. During catalysis, ATP synthesis in the catalytic domain of F(1) is coupled via a rotary mechanism of the central stalk subunits to proton translocation. Component of the F(0) channel, it forms part of the peripheral stalk, linking F(1) to F(0). This Chlorobium limicola (strain DSM 245 / NBRC 103803 / 6330) protein is ATP synthase subunit b.